A 61-amino-acid polypeptide reads, in one-letter code: uncharacterized protein (61 aa).

This is an uncharacterized protein from Escherichia coli (strain K12).